Here is a 212-residue protein sequence, read N- to C-terminus: Adenine phosphoribosyltransferase (212 aa).

It belongs to the purine/pyrimidine phosphoribosyltransferase family. In terms of assembly, homodimer.

It localises to the cytoplasm. It carries out the reaction AMP + diphosphate = 5-phospho-alpha-D-ribose 1-diphosphate + adenine. The protein operates within purine metabolism; AMP biosynthesis via salvage pathway; AMP from adenine: step 1/1. Catalyzes a salvage reaction resulting in the formation of AMP, that is energically less costly than de novo synthesis. This Mycobacterium tuberculosis (strain ATCC 25618 / H37Rv) protein is Adenine phosphoribosyltransferase.